We begin with the raw amino-acid sequence, 122 residues long: Large ribosomal subunit protein bL19 (122 aa).

It belongs to the bacterial ribosomal protein bL19 family.

This protein is located at the 30S-50S ribosomal subunit interface and may play a role in the structure and function of the aminoacyl-tRNA binding site. The polypeptide is Large ribosomal subunit protein bL19 (rplS) (Synechocystis sp. (strain ATCC 27184 / PCC 6803 / Kazusa)).